Consider the following 290-residue polypeptide: Phosphatidylglycerol--prolipoprotein diacylglyceryl transferase (290 aa).

Helical transmembrane passes span 21–41 (VSLH…MWLA), 60–80 (LLYA…VLFY), 96–116 (WDGG…MFWF), 130–150 (FIAP…FING), 198–218 (SQLY…NLFI), 225–245 (GAVS…VEAF), and 258–278 (VISM…IMMI). Arg143 is a binding site for a 1,2-diacyl-sn-glycero-3-phospho-(1'-sn-glycerol).

Belongs to the Lgt family.

Its subcellular location is the cell inner membrane. The catalysed reaction is L-cysteinyl-[prolipoprotein] + a 1,2-diacyl-sn-glycero-3-phospho-(1'-sn-glycerol) = an S-1,2-diacyl-sn-glyceryl-L-cysteinyl-[prolipoprotein] + sn-glycerol 1-phosphate + H(+). The protein operates within protein modification; lipoprotein biosynthesis (diacylglyceryl transfer). In terms of biological role, catalyzes the transfer of the diacylglyceryl group from phosphatidylglycerol to the sulfhydryl group of the N-terminal cysteine of a prolipoprotein, the first step in the formation of mature lipoproteins. This is Phosphatidylglycerol--prolipoprotein diacylglyceryl transferase from Serratia proteamaculans (strain 568).